The primary structure comprises 80 residues: Cytochrome c oxidase subunit 7B, mitochondrial (80 aa).

The N-terminal 24 residues, 1–24 (MFPLAKNALSRLRVQSIQQAVARQ), are a transit peptide targeting the mitochondrion. Residues 25-32 (IHQKRAPD) lie on the Mitochondrial matrix side of the membrane. A helical membrane pass occupies residues 33 to 59 (FHDKYGNAVLASGATFCVAVWVYMATQ). Residues 60-80 (IGIEWNPSPVGRVTPKEWREQ) are Mitochondrial intermembrane-facing.

The protein belongs to the cytochrome c oxidase VIIb family. Component of the cytochrome c oxidase (complex IV, CIV), a multisubunit enzyme composed of 14 subunits. The complex is composed of a catalytic core of 3 subunits MT-CO1, MT-CO2 and MT-CO3, encoded in the mitochondrial DNA, and 11 supernumerary subunits COX4I1 (or COX4I2), COX5A, COX5B, COX6A2 (or COX6A1), COX6B1 (or COX6B2), COX6C, COX7A1 (or COX7A2), COX7B, COX7C, COX8B and NDUFA4, which are encoded in the nuclear genome. The complex exists as a monomer or a dimer and forms supercomplexes (SCs) in the inner mitochondrial membrane with NADH-ubiquinone oxidoreductase (complex I, CI) and ubiquinol-cytochrome c oxidoreductase (cytochrome b-c1 complex, complex III, CIII), resulting in different assemblies (supercomplex SCI(1)III(2)IV(1) and megacomplex MCI(2)III(2)IV(2)).

Its subcellular location is the mitochondrion inner membrane. The protein operates within energy metabolism; oxidative phosphorylation. In terms of biological role, component of the cytochrome c oxidase, the last enzyme in the mitochondrial electron transport chain which drives oxidative phosphorylation. The respiratory chain contains 3 multisubunit complexes succinate dehydrogenase (complex II, CII), ubiquinol-cytochrome c oxidoreductase (cytochrome b-c1 complex, complex III, CIII) and cytochrome c oxidase (complex IV, CIV), that cooperate to transfer electrons derived from NADH and succinate to molecular oxygen, creating an electrochemical gradient over the inner membrane that drives transmembrane transport and the ATP synthase. Cytochrome c oxidase is the component of the respiratory chain that catalyzes the reduction of oxygen to water. Electrons originating from reduced cytochrome c in the intermembrane space (IMS) are transferred via the dinuclear copper A center (CU(A)) of subunit 2 and heme A of subunit 1 to the active site in subunit 1, a binuclear center (BNC) formed by heme A3 and copper B (CU(B)). The BNC reduces molecular oxygen to 2 water molecules using 4 electrons from cytochrome c in the IMS and 4 protons from the mitochondrial matrix. Plays a role in proper central nervous system (CNS) development in vertebrates. The chain is Cytochrome c oxidase subunit 7B, mitochondrial (COX7B) from Bos taurus (Bovine).